Reading from the N-terminus, the 1385-residue chain is DNA-directed RNA polymerase subunit beta (1385 aa).

It belongs to the RNA polymerase beta chain family. As to quaternary structure, the RNAP catalytic core consists of 2 alpha, 1 beta, 1 beta' and 1 omega subunit. When a sigma factor is associated with the core the holoenzyme is formed, which can initiate transcription.

The catalysed reaction is RNA(n) + a ribonucleoside 5'-triphosphate = RNA(n+1) + diphosphate. In terms of biological role, DNA-dependent RNA polymerase catalyzes the transcription of DNA into RNA using the four ribonucleoside triphosphates as substrates. The polypeptide is DNA-directed RNA polymerase subunit beta (Jannaschia sp. (strain CCS1)).